We begin with the raw amino-acid sequence, 224 residues long: Deoxyribose-phosphate aldolase (224 aa).

Catalysis depends on D91, which acts as the Proton donor/acceptor. The active-site Schiff-base intermediate with acetaldehyde is K152. K181 (proton donor/acceptor) is an active-site residue.

Belongs to the DeoC/FbaB aldolase family. DeoC type 1 subfamily.

Its subcellular location is the cytoplasm. It carries out the reaction 2-deoxy-D-ribose 5-phosphate = D-glyceraldehyde 3-phosphate + acetaldehyde. It participates in carbohydrate degradation; 2-deoxy-D-ribose 1-phosphate degradation; D-glyceraldehyde 3-phosphate and acetaldehyde from 2-deoxy-alpha-D-ribose 1-phosphate: step 2/2. Functionally, catalyzes a reversible aldol reaction between acetaldehyde and D-glyceraldehyde 3-phosphate to generate 2-deoxy-D-ribose 5-phosphate. The polypeptide is Deoxyribose-phosphate aldolase (Mycoplasma pneumoniae (strain ATCC 29342 / M129 / Subtype 1) (Mycoplasmoides pneumoniae)).